Here is a 353-residue protein sequence, read N- to C-terminus: Fe(3+) ions import ATP-binding protein FbpC 1 (353 aa).

The 231-residue stretch at 9 to 239 folds into the ABC transporter domain; it reads VVFRNICKQF…PASAFIADFM (231 aa). 41-48 is an ATP binding site; it reads GPSGCGKT.

Belongs to the ABC transporter superfamily. Fe(3+) ion importer (TC 3.A.1.10) family. In terms of assembly, the complex is composed of two ATP-binding proteins (FbpC), two transmembrane proteins (FbpB) and a solute-binding protein (FbpA).

The protein localises to the cell inner membrane. It carries out the reaction Fe(3+)(out) + ATP + H2O = Fe(3+)(in) + ADP + phosphate + H(+). Its function is as follows. Part of the ABC transporter complex FbpABC involved in Fe(3+) ions import. Responsible for energy coupling to the transport system. The sequence is that of Fe(3+) ions import ATP-binding protein FbpC 1 from Rhizobium meliloti (strain 1021) (Ensifer meliloti).